An 89-amino-acid chain; its full sequence is MTEAKKSLKRTLIGKVVSDKRAKTVTVLVERRVKHELYGKIVSLSSKYHAHDEKGEFKTGDVIEITESRPISKTKNWVVTRLVQKAEIV.

The protein belongs to the universal ribosomal protein uS17 family. As to quaternary structure, part of the 30S ribosomal subunit.

In terms of biological role, one of the primary rRNA binding proteins, it binds specifically to the 5'-end of 16S ribosomal RNA. The sequence is that of Small ribosomal subunit protein uS17 from Polaromonas naphthalenivorans (strain CJ2).